The sequence spans 267 residues: NAD kinase 1 (267 aa).

Asp-45 functions as the Proton acceptor in the catalytic mechanism. NAD(+) contacts are provided by residues 45–46 (DG), 122–123 (NE), Arg-149, Asp-151, and Ala-186.

This sequence belongs to the NAD kinase family. A divalent metal cation is required as a cofactor.

It is found in the cytoplasm. The catalysed reaction is NAD(+) + ATP = ADP + NADP(+) + H(+). Involved in the regulation of the intracellular balance of NAD and NADP, and is a key enzyme in the biosynthesis of NADP. Catalyzes specifically the phosphorylation on 2'-hydroxyl of the adenosine moiety of NAD to yield NADP. The polypeptide is NAD kinase 1 (Oceanobacillus iheyensis (strain DSM 14371 / CIP 107618 / JCM 11309 / KCTC 3954 / HTE831)).